The sequence spans 228 residues: Sugar fermentation stimulation protein homolog (228 aa).

Belongs to the SfsA family.

This is Sugar fermentation stimulation protein homolog from Desulfitobacterium hafniense (strain DSM 10664 / DCB-2).